Consider the following 1957-residue polypeptide: [F-actin]-monooxygenase MICAL2 (1957 aa).

The tract at residues 2–494 (GENEDEKQAQ…KHLYITKELE (493 aa)) is monooxygenase domain. FAD is bound by residues cysteine 97, 116-118 (EKR), 123-125 (RNN), phenylalanine 183, tyrosine 298, and aspartate 398. The 104-residue stretch at 516–619 (DIRPSKLLTW…MVMYLSKFYE (104 aa)) folds into the Calponin-homology (CH) domain. Residue serine 631 is modified to Phosphoserine. The Nuclear localization signal signature appears at 660 to 681 (RKRTPRVDGQTGENDMNKRRRK). Disordered stretches follow at residues 660-714 (RKRT…NQNK) and 886-942 (QNKL…HPSH). The span at 687–714 (DEPSNFSSRSLGSNQECGSSKEGGNQNK) shows a compositional bias: polar residues. The span at 899 to 910 (PPSPPSRLPSPD) shows a compositional bias: pro residues. The span at 911 to 925 (PAASSSPSTVDSASP) shows a compositional bias: low complexity. Residues 1000-1062 (DTCYFCKKRV…KPHFIHCKTN (63 aa)) form the LIM zinc-binding domain. Zn(2+)-binding residues include cysteine 1002, cysteine 1005, histidine 1023, cysteine 1026, cysteine 1029, cysteine 1032, cysteine 1052, and histidine 1055. Disordered stretches follow at residues 1070–1143 (AELK…PSEW), 1168–1243 (SEDS…TPSK), 1258–1345 (VNKR…LYLP), 1361–1431 (GEDG…EGGP), 1467–1626 (KAGE…SPPC), and 1675–1779 (ESRQ…KEKK). The span at 1185–1195 (SHTEPCEEKPW) shows a compositional bias: basic and acidic residues. Residues 1232-1243 (RANSFQSPTPSK) show a composition bias toward polar residues. Residues 1275 to 1294 (LPSSSSHSSSPPSSSSTSVS) show a composition bias toward low complexity. The segment covering 1302–1316 (SPPQMTASEPLSQVS) has biased composition (polar residues). The interaction with MAPK1 stretch occupies residues 1324–1363 (TPNFRRRAVAQGAPREIPLYLPHHPKPEWAEYCLVSPGED). 2 stretches are compositionally biased toward basic and acidic residues: residues 1388 to 1402 (SNHR…KDRS) and 1413 to 1431 (GEDR…EGGP). Residues 1485 to 1496 (VLKPVRPLLLPR) show a composition bias toward low complexity. Basic and acidic residues predominate over residues 1552–1562 (GGKKAWAKQES). Over residues 1570-1579 (CTRSFSLRKT) the composition is skewed to polar residues. Position 1688 is a phosphoserine (serine 1688). Over residues 1718 to 1733 (APPPPPPPPPPPPPPT) the composition is skewed to pro residues. Residues 1751-1762 (ASSSASSTSSSS) show a composition bias toward low complexity. The bMERB domain maps to 1796–1945 (KQEELKRLYK…EKAEDQHFES (150 aa)).

It belongs to the Mical family. Interacts with PLXNA4. Interacts with RAB1B. Interacts with MAPK1/ERK2. Interacts with RAB35, RAB8A, RAB10, RAB13 and RAB15 (in their GTP-bound forms); binding to RAB35 is of low affinity compared to other Rab proteins; at least in case of RAB8A may bind 2 molecules of RAB8A simultaneously through a high and a low affinity binding site, respectively. May interact with MAPK1/ERK2. Interacts with CORO1C; this interaction recruits MICAL2 to the actin filaments. The cofactor is FAD.

Its subcellular location is the nucleus. It is found in the cytoplasm. It catalyses the reaction L-methionyl-[F-actin] + NADPH + O2 + H(+) = L-methionyl-(R)-S-oxide-[F-actin] + NADP(+) + H2O. Its activity is regulated as follows. Specifically inhibited by CCG-1423, a small molecule inhibitor of SRF:MKL1/MRTF-A-dependent transcription. Its function is as follows. Methionine monooxygenase that promotes depolymerization of F-actin by mediating oxidation of residues 'Met-44' and 'Met-47' on actin to form methionine-sulfoxide, resulting in actin filament disassembly and preventing repolymerization. Regulates the disassembly of branched actin networks also by oxidizing ARP3B-containing ARP2/3 complexes leading to ARP3B dissociation from the network. Acts as a key regulator of the SRF signaling pathway elicited by nerve growth factor and serum: mediates oxidation and subsequent depolymerization of nuclear actin, leading to increase MKL1/MRTF-A presence in the nucleus and promote SRF:MKL1/MRTF-A-dependent gene transcription. Does not activate SRF:MKL1/MRTF-A through RhoA. The sequence is that of [F-actin]-monooxygenase MICAL2 from Homo sapiens (Human).